The sequence spans 358 residues: MSATYTDLREKLQSLYRDSPKEVRKRKQPTSDTEEEEAASEPEEEEEARKVRSGIRQVRLFSPDECARIEAKIDEVVSRAEKGLYREHTVDRAPLRNKYFFGEGYTYGAQLQRRGPGQERLYPKGEVDEIPAWVNELVIRRLVEHRVIPEGFVNSAVINDYQPGGCIVSHVDPIHIFERPIVSVSFFSDSALCFGCKFQFKPIRVSEPVFFLPVQRGSVTVLSGYAADEITHCIRPQDIKERRAVVILRKTRTEAPRLEMKSLSSSYQPERLQGSNRQHILKPKRSHRKADPDAAHRPRILEMDKEENRRSVLLPKQRRRSHFSSENYWRRSHDYVDTYTETGEDDGSPVRKVKMRRH.

The interval 1-50 (MSATYTDLREKLQSLYRDSPKEVRKRKQPTSDTEEEEAASEPEEEEEARK) is disordered. Basic and acidic residues predominate over residues 7–22 (DLREKLQSLYRDSPKE). The segment covering 32-46 (DTEEEEAASEPEEEE) has biased composition (acidic residues). Tyr-105 is an active-site residue. 2-oxoglutarate-binding residues include Asn-159, Tyr-161, His-170, His-232, and Arg-243. An intrachain disulfide couples Cys-196 to Cys-233. Disordered regions lie at residues 259–312 (EMKS…RRSV) and 334–358 (DYVD…MRRH). Residues 262 to 278 (SLSSSYQPERLQGSNRQ) are compositionally biased toward polar residues. Over residues 279-288 (HILKPKRSHR) the composition is skewed to basic residues. The segment covering 289–310 (KADPDAAHRPRILEMDKEENRR) has biased composition (basic and acidic residues).

Belongs to the alkB family. Monomer. Fe(2+) is required as a cofactor.

Its subcellular location is the nucleus speckle. The enzyme catalyses an N(6)-methyladenosine in mRNA + 2-oxoglutarate + O2 = an adenosine in mRNA + formaldehyde + succinate + CO2. Functionally, dioxygenase that specifically demethylates N(6)-methyladenosine (m6A) RNA, the most prevalent internal modification of messenger RNA (mRNA) in higher eukaryotes. Demethylates RNA by oxidative demethylation, which requires molecular oxygen, alpha-ketoglutarate and iron. Demethylation of m6A mRNA affects mRNA processing, translation and export. In Xenopus tropicalis (Western clawed frog), this protein is RNA demethylase ALKBH5 (alkbh5).